Here is a 146-residue protein sequence, read N- to C-terminus: Mediator of RNA polymerase II transcription subunit 31 (146 aa).

A disordered region spans residues asparagine 121 to asparagine 146. A compositionally biased stretch (basic and acidic residues) spans aspartate 126–glutamate 139.

The protein belongs to the Mediator complex subunit 31 family. Component of the Mediator complex.

The protein localises to the nucleus. Its function is as follows. Component of the Mediator complex, a coactivator involved in the regulated transcription of nearly all RNA polymerase II-dependent genes. Mediator functions as a bridge to convey information from gene-specific regulatory proteins to the basal RNA polymerase II transcription machinery. Mediator is recruited to promoters by direct interactions with regulatory proteins and serves as a scaffold for the assembly of a functional preinitiation complex with RNA polymerase II and the general transcription factors. The protein is Mediator of RNA polymerase II transcription subunit 31 (SOH1) of Candida albicans (strain SC5314 / ATCC MYA-2876) (Yeast).